A 663-amino-acid polypeptide reads, in one-letter code: Drug sensory protein A (663 aa).

Transmembrane regions (helical) follow at residues 32–52 (LMAA…FWAV), 165–185 (VFIP…GINP), and 199–219 (VTIA…VFNA). The 53-residue stretch at 220 to 272 (LTITQPIKELLLGVKNIAAGNFKQRITLPFGGELGELIVNFNEMAERLERYEA) folds into the HAMP domain. Residues 281 to 351 (EKAKLDTLVS…QPLRELAADQ (71 aa)) enclose the PAS domain. The region spanning 429 to 656 (NVSHELRTPL…TFWFDLAVYQ (228 aa)) is the Histidine kinase domain. H432 bears the Phosphohistidine; by autocatalysis mark.

The protein resides in the cell membrane. It carries out the reaction ATP + protein L-histidine = ADP + protein N-phospho-L-histidine.. The chain is Drug sensory protein A (dspA) from Synechocystis sp. (strain ATCC 27184 / PCC 6803 / Kazusa).